The sequence spans 542 residues: CTP synthase (542 aa).

The tract at residues 1–265 is amidoligase domain; that stretch reads MARYVFITGG…DSEVLSAFGI (265 aa). Residue S13 coordinates CTP. S13 contributes to the UTP binding site. ATP is bound at residue 14–19; it reads SLGKGI. Y54 contacts L-glutamine. Position 71 (D71) interacts with ATP. Residues D71 and E139 each contribute to the Mg(2+) site. Residues 146–148, 186–191, and K222 contribute to the CTP site; these read DIE and KTKPTQ. UTP contacts are provided by residues 186-191 and K222; that span reads KTKPTQ. A Glutamine amidotransferase type-1 domain is found at 291–541; the sequence is TIAVVGKYTG…IEAAIEQSRL (251 aa). Residue G353 coordinates L-glutamine. The Nucleophile; for glutamine hydrolysis role is filled by C380. L-glutamine-binding positions include 381 to 384, E404, and R469; that span reads FGMQ. Residues H514 and E516 contribute to the active site.

This sequence belongs to the CTP synthase family. In terms of assembly, homotetramer.

The enzyme catalyses UTP + L-glutamine + ATP + H2O = CTP + L-glutamate + ADP + phosphate + 2 H(+). It catalyses the reaction L-glutamine + H2O = L-glutamate + NH4(+). The catalysed reaction is UTP + NH4(+) + ATP = CTP + ADP + phosphate + 2 H(+). It participates in pyrimidine metabolism; CTP biosynthesis via de novo pathway; CTP from UDP: step 2/2. Allosterically activated by GTP, when glutamine is the substrate; GTP has no effect on the reaction when ammonia is the substrate. The allosteric effector GTP functions by stabilizing the protein conformation that binds the tetrahedral intermediate(s) formed during glutamine hydrolysis. Inhibited by the product CTP, via allosteric rather than competitive inhibition. Its function is as follows. Catalyzes the ATP-dependent amination of UTP to CTP with either L-glutamine or ammonia as the source of nitrogen. Regulates intracellular CTP levels through interactions with the four ribonucleotide triphosphates. The chain is CTP synthase from Brucella suis (strain ATCC 23445 / NCTC 10510).